We begin with the raw amino-acid sequence, 953 residues long: Nonsense-mediated mRNA decay factor SMG8 (953 aa).

Disordered stretches follow at residues 571–604 and 629–653; these read AQDAELDPDEEDEELPTGEREEQHITQSNGCSQP and PCFDQSSSSEAESTCSGTSSEESNN. Residues 574 to 586 show a composition bias toward acidic residues; sequence AELDPDEEDEELP. Positions 595-604 are enriched in polar residues; it reads ITQSNGCSQP. Residues 634–653 show a composition bias toward low complexity; it reads SSSSEAESTCSGTSSEESNN.

This sequence belongs to the SMG8 family.

Functionally, involved in nonsense-mediated decay (NMD) of mRNAs containing premature stop codons. Probable component of kinase complex containing nonC and recruited to stalled ribosomes. The protein is Nonsense-mediated mRNA decay factor SMG8 of Drosophila persimilis (Fruit fly).